Reading from the N-terminus, the 340-residue chain is S-adenosylmethionine:tRNA ribosyltransferase-isomerase (340 aa).

This sequence belongs to the QueA family. As to quaternary structure, monomer.

The protein localises to the cytoplasm. It carries out the reaction 7-aminomethyl-7-carbaguanosine(34) in tRNA + S-adenosyl-L-methionine = epoxyqueuosine(34) in tRNA + adenine + L-methionine + 2 H(+). It participates in tRNA modification; tRNA-queuosine biosynthesis. In terms of biological role, transfers and isomerizes the ribose moiety from AdoMet to the 7-aminomethyl group of 7-deazaguanine (preQ1-tRNA) to give epoxyqueuosine (oQ-tRNA). In Macrococcus caseolyticus (strain JCSC5402) (Macrococcoides caseolyticum), this protein is S-adenosylmethionine:tRNA ribosyltransferase-isomerase.